We begin with the raw amino-acid sequence, 90 residues long: MGAKAPRGPKVAQWAMETAVIGVVVVLFVVTVAITCVLCCFSCDSRAQDPQGGPGRSFTVATFRQEASLFTGPVRHAQPVPSAQDFWTFM.

Residues Met1–Thr18 lie on the Lumenal side of the membrane. The helical transmembrane segment at Ala19–Cys39 threads the bilayer. Over Cys40–Met90 the chain is Cytoplasmic.

As to quaternary structure, interacts with components of the lysosomal V-ATPase complex. Interacts with ATP6V0A1. Interacts with ATP6V0A2. Highly expressed in lung, heart and skeletal muscle.

Its subcellular location is the late endosome membrane. The protein localises to the lysosome membrane. In terms of biological role, negative regulator of amino acid sensing and mTORC1, a signaling complex promoting cell growth in response to growth factors, energy levels and amino acids. Negatively regulates mTORC1 activation by inhibiting recruitment of mTORC1 to lysosomes upon stimulation with amino acids: acts by promoting the formation of a tightly bound supercomplex composed of the lysosomal V-ATPase, Ragulator and Rag GTPases, preventing recruitment of mTORC1. Acts as a regulator of muscle regeneration following injury by regulating mTORC1 activation. The protein is Small regulatory polypeptide of amino acid response of Homo sapiens (Human).